Reading from the N-terminus, the 191-residue chain is Large ribosomal subunit protein eL15 (191 aa).

It belongs to the eukaryotic ribosomal protein eL15 family.

The polypeptide is Large ribosomal subunit protein eL15 (rpl15e) (Pyrobaculum aerophilum (strain ATCC 51768 / DSM 7523 / JCM 9630 / CIP 104966 / NBRC 100827 / IM2)).